The following is a 232-amino-acid chain: MRVLLIEDDSAIAQSIELMLKSESFNVYTTDLGEEGIDLGKLYDYDIILLDLNLPDMSGYEVLRTLRLSKVKTPILILSGMAGIEDKVRGLGFGADDYMTKPFHKDELIARIHAIVRRSKGHAQSVITTGDLVVNLDAKTVEVAGQRVHLTGKEYQMLELLSLRKGTTLTKEMFLNHLYGGMDEPELKIIDVFICKLRKKLDAVSGNQSYIETVWGRGYVLREPDAEMRESA.

The 115-residue stretch at Arg2–Val116 folds into the Response regulatory domain. 4-aspartylphosphate is present on Asp51. The segment at residues Gln124 to Glu223 is a DNA-binding region (ompR/PhoB-type).

Forms an asymmetric heterotetramer with ChpT (2:2). There are at least two modes of interaction between ChpT and CtrA, only one of which is competent to catalyze His-Asp phosphoryl transfer. Post-translationally, is phosphorylated by ChpT-P on Asp-51.

The protein resides in the cytoplasm. Component of a regulatory phosphorelay system that controls B.abortus cell growth, division, and intracellular survival inside mammalian host cells. This signaling pathway is composed of CckA, ChpT, CtrA and CpdR. CtrA is a response regulator substrate of ChpT. When phosphorylated, directly regulates the expression of ccrM. Is also probably involved in the transcriptional regulation of rpoD, pleC, minC and ftsE genes. This is Cell cycle response regulator CtrA (ctrA) from Brucella abortus (strain S19).